A 130-amino-acid chain; its full sequence is Small ribosomal subunit protein uS9 (130 aa).

It belongs to the universal ribosomal protein uS9 family.

The sequence is that of Small ribosomal subunit protein uS9 from Clostridium beijerinckii (strain ATCC 51743 / NCIMB 8052) (Clostridium acetobutylicum).